The chain runs to 513 residues: GMP synthase [glutamine-hydrolyzing] (513 aa).

The region spanning 5-195 (LVLVIDFGGQ…VYNICGCTGD (191 aa)) is the Glutamine amidotransferase type-1 domain. C82 serves as the catalytic Nucleophile. Active-site residues include H169 and E171. The region spanning 196 to 388 (WKMDSFVEKT…LGIPEKLVFR (193 aa)) is the GMPS ATP-PPase domain. ATP is bound at residue 223–229 (SGGVDSS).

Homodimer.

It carries out the reaction XMP + L-glutamine + ATP + H2O = GMP + L-glutamate + AMP + diphosphate + 2 H(+). The protein operates within purine metabolism; GMP biosynthesis; GMP from XMP (L-Gln route): step 1/1. Functionally, catalyzes the synthesis of GMP from XMP. The chain is GMP synthase [glutamine-hydrolyzing] from Clostridium botulinum (strain Eklund 17B / Type B).